The sequence spans 208 residues: Protein-L-isoaspartate O-methyltransferase (208 aa).

Residue Ser-59 is part of the active site.

This sequence belongs to the methyltransferase superfamily. L-isoaspartyl/D-aspartyl protein methyltransferase family.

The protein localises to the cytoplasm. The catalysed reaction is [protein]-L-isoaspartate + S-adenosyl-L-methionine = [protein]-L-isoaspartate alpha-methyl ester + S-adenosyl-L-homocysteine. Functionally, catalyzes the methyl esterification of L-isoaspartyl residues in peptides and proteins that result from spontaneous decomposition of normal L-aspartyl and L-asparaginyl residues. It plays a role in the repair and/or degradation of damaged proteins. The sequence is that of Protein-L-isoaspartate O-methyltransferase from Vibrio cholerae serotype O1 (strain ATCC 39541 / Classical Ogawa 395 / O395).